Here is an 89-residue protein sequence, read N- to C-terminus: MSITVERKKALISEYADLENNTGSVEVQCAILTERIINLTQHCKINFKDFHSKRGLLMLVSSRRKLLSYLKKKDLNRYTQLINRLGLRK.

The protein belongs to the universal ribosomal protein uS15 family. Part of the 30S ribosomal subunit. Forms a bridge to the 50S subunit in the 70S ribosome, contacting the 23S rRNA.

Its function is as follows. One of the primary rRNA binding proteins, it binds directly to 16S rRNA where it helps nucleate assembly of the platform of the 30S subunit by binding and bridging several RNA helices of the 16S rRNA. Functionally, forms an intersubunit bridge (bridge B4) with the 23S rRNA of the 50S subunit in the ribosome. This chain is Small ribosomal subunit protein uS15, found in Orientia tsutsugamushi (strain Boryong) (Rickettsia tsutsugamushi).